Consider the following 608-residue polypeptide: Nuclear protein localization protein 4 homolog (608 aa).

Ala2 carries the N-acetylalanine modification. Position 179 is an N6-acetyllysine (Lys179). The 138-residue stretch at 226–363 folds into the MPN domain; the sequence is IMFENHTVAD…ICRLSPDGHF (138 aa). A RanBP2-type zinc finger spans residues 580-608; sequence TSAMWACQHCTFMNQPGTGHCEMCSLPRT.

The protein belongs to the NPL4 family. Heterodimer with UFD1. The heterodimer binds ubiquitinated proteins. The heterodimer binds to VCP and inhibits Golgi membrane fusion. Interacts with ZFAND2B; probably through VCP.

Its subcellular location is the cytoplasm. The protein localises to the cytosol. The protein resides in the endoplasmic reticulum. It is found in the nucleus. The protein operates within protein degradation; proteasomal ubiquitin-dependent pathway. In terms of biological role, the ternary complex containing UFD1, VCP and NPLOC4 binds ubiquitinated proteins and is necessary for the export of misfolded proteins from the ER to the cytoplasm, where they are degraded by the proteasome. The NPLOC4-UFD1-VCP complex regulates spindle disassembly at the end of mitosis and is necessary for the formation of a closed nuclear envelope. Acts as a negative regulator of type I interferon production via the complex formed with VCP and UFD1, which binds to RIGI and recruits RNF125 to promote ubiquitination and degradation of RIGI. In Rattus norvegicus (Rat), this protein is Nuclear protein localization protein 4 homolog (Nploc4).